Consider the following 440-residue polypeptide: C4-dicarboxylate transport protein (440 aa).

8 consecutive transmembrane segments (helical) span residues 8–28 (LYLQVLLAVVLGALVGHLFPA), 40–60 (FIKLVKMLIAPIVFATVVTGI), 74–94 (LKGLLYFEVLTTVALAIGLVV), 147–167 (GDILQVLLFSVLFGAALAALK), 187–207 (IVGFVMRLAPVGAFGAMAFTV), 221–241 (LIACFYATSALFVVLMLGLVL), 288–308 (VVGLVVPMGYSFNLDGTSIYL), and 354–374 (AATLSAVGNIPVAGLALLLGV). The segment at 419–440 (EEVEPANEPEPPAIPAGAGLHG) is disordered.

It belongs to the dicarboxylate/amino acid:cation symporter (DAACS) (TC 2.A.23) family.

The protein localises to the cell inner membrane. In terms of biological role, responsible for the transport of dicarboxylates such as succinate, fumarate, and malate from the periplasm across the membrane. This chain is C4-dicarboxylate transport protein, found in Anaeromyxobacter sp. (strain K).